A 227-amino-acid polypeptide reads, in one-letter code: Cysteine-rich hydrophobic domain-containing protein 1 (227 aa).

The interval 1–84 (MSILLPNMAE…PPRVVSEEHL (84 aa)) is disordered. The segment covering 13 to 23 (TISELEEEEEA) has biased composition (acidic residues). Over residues 24–44 (ATSSSSPSSSPSSSSSSSVSG) the composition is skewed to low complexity. Over residues 45–72 (PDEDEEDEEEEEEEDEEEEDEEEEEEEV) the composition is skewed to acidic residues. A coiled-coil region spans residues 46–73 (DEDEEDEEEEEEEDEEEEDEEEEEEEVP).

The protein belongs to the CHIC family. In terms of processing, palmitoylated. In terms of tissue distribution, expressed moderately in the brain.

Its subcellular location is the cell membrane. The protein resides in the cytoplasmic vesicle. This chain is Cysteine-rich hydrophobic domain-containing protein 1 (Chic1), found in Mus musculus (Mouse).